The chain runs to 97 residues: uncharacterized protein (97 aa).

This is an uncharacterized protein from Escherichia coli (Bacteriophage T4).